A 51-amino-acid polypeptide reads, in one-letter code: Sperm protamine P1 (51 aa).

This sequence belongs to the protamine P1 family. Cross-linked by interchain disulfide bonds around the DNA-helix. Testis.

It localises to the nucleus. The protein localises to the chromosome. Functionally, protamines substitute for histones in the chromatin of sperm during the haploid phase of spermatogenesis. They compact sperm DNA into a highly condensed, stable and inactive complex. This Pongo pygmaeus (Bornean orangutan) protein is Sperm protamine P1 (PRM1).